Reading from the N-terminus, the 227-residue chain is Cytochrome c oxidase subunit 2 (227 aa).

Residues 1–14 (MAHPVQLGLQDATS) lie on the Mitochondrial intermembrane side of the membrane. Residues 15 to 45 (PVMEELVTFHDHALMAMFLISFLILYALSAT) traverse the membrane as a helical segment. The Mitochondrial matrix segment spans residues 46–59 (LTTKLTNTNITDAQ). A helical membrane pass occupies residues 60 to 87 (EMETIWTILPAVILVLIALPSLRILYMT). The Mitochondrial intermembrane segment spans residues 88-227 (DEINNPSFTI…IFEMGPVFTL (140 aa)). 6 residues coordinate Cu cation: His-161, Cys-196, Glu-198, Cys-200, His-204, and Met-207. Glu-198 serves as a coordination point for Mg(2+).

Belongs to the cytochrome c oxidase subunit 2 family. As to quaternary structure, component of the cytochrome c oxidase (complex IV, CIV), a multisubunit enzyme composed of 14 subunits. The complex is composed of a catalytic core of 3 subunits MT-CO1, MT-CO2 and MT-CO3, encoded in the mitochondrial DNA, and 11 supernumerary subunits COX4I, COX5A, COX5B, COX6A, COX6B, COX6C, COX7A, COX7B, COX7C, COX8 and NDUFA4, which are encoded in the nuclear genome. The complex exists as a monomer or a dimer and forms supercomplexes (SCs) in the inner mitochondrial membrane with NADH-ubiquinone oxidoreductase (complex I, CI) and ubiquinol-cytochrome c oxidoreductase (cytochrome b-c1 complex, complex III, CIII), resulting in different assemblies (supercomplex SCI(1)III(2)IV(1) and megacomplex MCI(2)III(2)IV(2)). Found in a complex with TMEM177, COA6, COX18, COX20, SCO1 and SCO2. Interacts with TMEM177 in a COX20-dependent manner. Interacts with COX20. Interacts with COX16. It depends on Cu cation as a cofactor.

It is found in the mitochondrion inner membrane. It catalyses the reaction 4 Fe(II)-[cytochrome c] + O2 + 8 H(+)(in) = 4 Fe(III)-[cytochrome c] + 2 H2O + 4 H(+)(out). Component of the cytochrome c oxidase, the last enzyme in the mitochondrial electron transport chain which drives oxidative phosphorylation. The respiratory chain contains 3 multisubunit complexes succinate dehydrogenase (complex II, CII), ubiquinol-cytochrome c oxidoreductase (cytochrome b-c1 complex, complex III, CIII) and cytochrome c oxidase (complex IV, CIV), that cooperate to transfer electrons derived from NADH and succinate to molecular oxygen, creating an electrochemical gradient over the inner membrane that drives transmembrane transport and the ATP synthase. Cytochrome c oxidase is the component of the respiratory chain that catalyzes the reduction of oxygen to water. Electrons originating from reduced cytochrome c in the intermembrane space (IMS) are transferred via the dinuclear copper A center (CU(A)) of subunit 2 and heme A of subunit 1 to the active site in subunit 1, a binuclear center (BNC) formed by heme A3 and copper B (CU(B)). The BNC reduces molecular oxygen to 2 water molecules using 4 electrons from cytochrome c in the IMS and 4 protons from the mitochondrial matrix. This Theropithecus gelada (Gelada baboon) protein is Cytochrome c oxidase subunit 2 (MT-CO2).